The chain runs to 198 residues: Patulin synthesis protein F (198 aa).

The signal sequence occupies residues 1–18 (MRLSTVLLGSLLGALTQA). N-linked (GlcNAc...) asparagine glycosylation is found at Asn-128 and Asn-184.

It belongs to the patF family.

The protein localises to the cytoplasm. The protein resides in the cytosol. It catalyses the reaction phyllostine = neopatulin. The protein operates within mycotoxin biosynthesis; patulin biosynthesis. Functionally, part of the gene cluster that mediates the biosynthesis of patulin, an acetate-derived tetraketide mycotoxin produced by several fungal species that shows antimicrobial properties against several bacteria. PatF catalyzes the conversion of phyllostine into neopatulin. The pathway begins with the synthesis of 6-methylsalicylic acid by the polyketide synthase (PKS) patK via condensation of acetate and malonate units. The 6-methylsalicylic acid decarboxylase patG then catalyzes the decarboxylation of 6-methylsalicylic acid to yield m-cresol (also known as 3-methylphenol). These first reactions occur in the cytosol. The intermediate m-cresol is then transported into the endoplasmic reticulum where the cytochrome P450 monooxygenase patH converts it to m-hydroxybenzyl alcohol, which is further converted to gentisyl alcohol by the cytochrome P450 monooxygenase patI. The oxidoreductases patJ and patO further convert gentisyl alcohol to isoepoxydon in the vacuole. PatN catalyzes then the transformation of isoepoxydon into phyllostine. The cluster protein patF is responsible for the conversion from phyllostine to neopatulin whereas the alcohol dehydrogenase patD converts neopatulin to E-ascladiol. The steps between isoepoxydon and E-ascladiol occur in the cytosol, and E-ascladiol is probably secreted to the extracellular space by one of the cluster-specific transporters patC or patM. Finally, the secreted patulin synthase patE catalyzes the conversion of E-ascladiol to patulin. The sequence is that of Patulin synthesis protein F from Aspergillus clavatus (strain ATCC 1007 / CBS 513.65 / DSM 816 / NCTC 3887 / NRRL 1 / QM 1276 / 107).